We begin with the raw amino-acid sequence, 293 residues long: Acetylglutamate kinase (293 aa).

Residues 70–71 (GG), arginine 92, and asparagine 186 contribute to the substrate site.

This sequence belongs to the acetylglutamate kinase family. ArgB subfamily.

It is found in the cytoplasm. It carries out the reaction N-acetyl-L-glutamate + ATP = N-acetyl-L-glutamyl 5-phosphate + ADP. Its pathway is amino-acid biosynthesis; L-arginine biosynthesis; N(2)-acetyl-L-ornithine from L-glutamate: step 2/4. Catalyzes the ATP-dependent phosphorylation of N-acetyl-L-glutamate. In Synechococcus sp. (strain CC9605), this protein is Acetylglutamate kinase.